A 172-amino-acid chain; its full sequence is Ribosome maturation factor RimM (172 aa).

One can recognise a PRC barrel domain in the interval 97–170 (ENEFYFHEII…KITIEVMEGL (74 aa)).

This sequence belongs to the RimM family. Binds ribosomal protein uS19.

It is found in the cytoplasm. An accessory protein needed during the final step in the assembly of 30S ribosomal subunit, possibly for assembly of the head region. Essential for efficient processing of 16S rRNA. May be needed both before and after RbfA during the maturation of 16S rRNA. It has affinity for free ribosomal 30S subunits but not for 70S ribosomes. This chain is Ribosome maturation factor RimM, found in Listeria monocytogenes serovar 1/2a (strain ATCC BAA-679 / EGD-e).